The primary structure comprises 332 residues: Malate dehydrogenase, cytoplasmic (332 aa).

Residues glutamine 16–isoleucine 17, aspartate 43, and glycine 90 each bind NAD(+). Arginine 99 contributes to the oxaloacetate binding site. Residues glutamine 113 and asparagine 132 each coordinate NAD(+). Oxaloacetate is bound by residues asparagine 132, arginine 163, histidine 188, and serine 243. Catalysis depends on histidine 188, which acts as the Proton acceptor.

It belongs to the LDH/MDH superfamily. MDH type 2 family. Monomer. In terms of tissue distribution, expressed constitutively in roots.

The protein resides in the cell membrane. It carries out the reaction (S)-malate + NAD(+) = oxaloacetate + NADH + H(+). In terms of biological role, malate dehydrogenase; catalyzes a reversible NAD-dependent dehydrogenase reaction involved in central metabolism and redox homeostasis. The protein is Malate dehydrogenase, cytoplasmic of Zea mays (Maize).